The following is a 330-amino-acid chain: tRNA(Ile)-lysidine synthase (330 aa).

31-36 (SGGQDS) provides a ligand contact to ATP.

The protein belongs to the tRNA(Ile)-lysidine synthase family.

It localises to the cytoplasm. It catalyses the reaction cytidine(34) in tRNA(Ile2) + L-lysine + ATP = lysidine(34) in tRNA(Ile2) + AMP + diphosphate + H(+). Its function is as follows. Ligates lysine onto the cytidine present at position 34 of the AUA codon-specific tRNA(Ile) that contains the anticodon CAU, in an ATP-dependent manner. Cytidine is converted to lysidine, thus changing the amino acid specificity of the tRNA from methionine to isoleucine. This Synechocystis sp. (strain ATCC 27184 / PCC 6803 / Kazusa) protein is tRNA(Ile)-lysidine synthase.